A 277-amino-acid chain; its full sequence is Proteasome subunit beta type-7 (277 aa).

A propeptide spans Met-1–Gly-43 (removed in mature form). Thr-44 acts as the Nucleophile in catalysis.

This sequence belongs to the peptidase T1B family. In terms of assembly, the 26S proteasome consists of a 20S proteasome core and two 19S regulatory subunits. The 20S proteasome core is a barrel-shaped complex made of 28 subunits that are arranged in four stacked rings. The two outer rings are each formed by seven alpha subunits, and the two inner rings are formed by seven beta subunits. The proteolytic activity is exerted by three beta-subunits PSMB5, PSMB6 and PSMB7.

The protein localises to the cytoplasm. The protein resides in the nucleus. The catalysed reaction is Cleavage of peptide bonds with very broad specificity.. In terms of biological role, component of the 20S core proteasome complex involved in the proteolytic degradation of most intracellular proteins. This complex plays numerous essential roles within the cell by associating with different regulatory particles. Associated with two 19S regulatory particles, forms the 26S proteasome and thus participates in the ATP-dependent degradation of ubiquitinated proteins. The 26S proteasome plays a key role in the maintenance of protein homeostasis by removing misfolded or damaged proteins that could impair cellular functions, and by removing proteins whose functions are no longer required. Associated with the PA200 or PA28, the 20S proteasome mediates ubiquitin-independent protein degradation. This type of proteolysis is required in several pathways including spermatogenesis (20S-PA200 complex) or generation of a subset of MHC class I-presented antigenic peptides (20S-PA28 complex). Within the 20S core complex, PSMB7 displays a trypsin-like activity. The protein is Proteasome subunit beta type-7 (Psmb7) of Mus musculus (Mouse).